The following is a 238-amino-acid chain: 1-(5-phosphoribosyl)-5-[(5-phosphoribosylamino)methylideneamino] imidazole-4-carboxamide isomerase (238 aa).

Residue Asp8 is the Proton acceptor of the active site. The Proton donor role is filled by Asp130.

This sequence belongs to the HisA/HisF family.

The protein resides in the cytoplasm. The enzyme catalyses 1-(5-phospho-beta-D-ribosyl)-5-[(5-phospho-beta-D-ribosylamino)methylideneamino]imidazole-4-carboxamide = 5-[(5-phospho-1-deoxy-D-ribulos-1-ylimino)methylamino]-1-(5-phospho-beta-D-ribosyl)imidazole-4-carboxamide. It functions in the pathway amino-acid biosynthesis; L-histidine biosynthesis; L-histidine from 5-phospho-alpha-D-ribose 1-diphosphate: step 4/9. In Methanococcus vannielii (strain ATCC 35089 / DSM 1224 / JCM 13029 / OCM 148 / SB), this protein is 1-(5-phosphoribosyl)-5-[(5-phosphoribosylamino)methylideneamino] imidazole-4-carboxamide isomerase.